Consider the following 354-residue polypeptide: Guanine nucleotide-binding protein G(i) subunit alpha-1 (354 aa).

Residue Gly2 is the site of N-myristoyl glycine attachment. A lipid anchor (S-palmitoyl cysteine) is attached at Cys3. Residues 32–354 (REVKLLLLGA…KNNLKDCGLF (323 aa)) enclose the G-alpha domain. The G1 motif stretch occupies residues 35–48 (KLLLLGAGESGKST). GTP-binding positions include 43–48 (ESGKST), 150–151 (DS), and 175–178 (LRTR). Ser47 contributes to the Mg(2+) binding site. A G2 motif region spans residues 173–181 (DVLRTRVKT). Residue Thr181 participates in Mg(2+) binding. Residues 196 to 205 (FKMFDVGGQR) form a G3 motif region. GTP contacts are provided by residues 200 to 204 (DVGGQ), 269 to 272 (NKKD), and Ala326. Residues 265 to 272 (ILFLNKKD) are G4 motif. The tract at residues 324 to 329 (TCATDT) is G5 motif.

This sequence belongs to the G-alpha family. G(i/o/t/z) subfamily. In terms of assembly, heterotrimeric G proteins are composed of 3 units; alpha, beta and gamma. The alpha chain contains the guanine nucleotide binding site. Part of a spindle orientation complex at least composed of GNAI1, GPSM2 and NUMA1. Identified in complex with the beta subunit GNB1 and the gamma subunit GNG1. Identified in complex with the beta subunit GNB1 and the gamma subunit GNG2. Component of the TAS2R14-GNAI1 complex, consisting of TAS2R14, GNAI1, GNB1 and GNG2; within the complex interacts with TAS2R14; this complex plays a role in the perception of bitterness. GTP binding causes dissociation of the heterotrimer, liberating the individual subunits so that they can interact with downstream effector proteins. Interacts (GDP-bound form) with GPSM1; this inhibits guanine nucleotide exchange and GTP binding. Interacts (GDP-bound form) with GPSM2 (via GoLoco domains); this inhibits guanine nucleotide exchange. Interacts with RGS10; this strongly enhances GTP hydrolysis. Interacts with RGS1 and RGS16; this strongly enhances GTPase activity. Interacts with RGS4. Interacts with RGS12. Interacts (via active GTP- or inactive GDP-bound forms) with RGS14 (via RGS and GoLoco domains). Interacts with RGS3, RGS6, RGS7, RGS8, RGS17, RGS18 and RGS20 (in vitro). Interacts (GDP-bound form) with RIC8A (via C-terminus); promoting GNAI1 folding and association with the plasma membrane. Interacts (inactive GDP-bound form) with NUCB1 (via GBA motif); the interaction leads to activation of GNAI1. Interacts (inactive GDP-bound form) with CCDC88C/DAPLE (via GBA motif); the interaction leads to activation of GNAI1. Interacts (inactive GDP-bound form) with CCDC8A/GIV (via GBA motif). In terms of processing, myristoylation at Gly-2 is required for membrane anchoring before palmitoylation. Post-translationally, palmitoylation at Cys-3 varies with membrane lipid composition. Mainly expressed in the brain, lung and kidney.

The protein resides in the nucleus. It localises to the cytoplasm. Its subcellular location is the cell membrane. The protein localises to the cytoskeleton. It is found in the microtubule organizing center. The protein resides in the centrosome. It localises to the cell cortex. Its subcellular location is the membrane. It catalyses the reaction GTP + H2O = GDP + phosphate + H(+). Guanine nucleotide-binding proteins (G proteins) function as transducers downstream of G protein-coupled receptors (GPCRs) in numerous signaling cascades. The alpha chain contains the guanine nucleotide binding site and alternates between an active, GTP-bound state and an inactive, GDP-bound state. Signaling by an activated GPCR promotes GDP release and GTP binding. The alpha subunit has a low GTPase activity that converts bound GTP to GDP, thereby terminating the signal. Both GDP release and GTP hydrolysis are modulated by numerous regulatory proteins. Signaling is mediated via effector proteins, such as adenylate cyclase. Inhibits adenylate cyclase activity of ADCY1, ADCY5 and ADCY6, leading to decreased intracellular cAMP levels. The inactive GDP-bound form prevents the association of RGS14 with centrosomes and is required for the translocation of RGS14 from the cytoplasm to the plasma membrane. Required for normal cytokinesis during mitosis. Required for cortical dynein-dynactin complex recruitment during metaphase. The polypeptide is Guanine nucleotide-binding protein G(i) subunit alpha-1 (GNAI1) (Cavia porcellus (Guinea pig)).